Consider the following 382-residue polypeptide: Alkanesulfonate monooxygenase (382 aa).

Belongs to the SsuD family. Homotetramer.

The enzyme catalyses an alkanesulfonate + FMNH2 + O2 = an aldehyde + FMN + sulfite + H2O + 2 H(+). Catalyzes the desulfonation of aliphatic sulfonates. This Yersinia pestis bv. Antiqua (strain Antiqua) protein is Alkanesulfonate monooxygenase.